Reading from the N-terminus, the 721-residue chain is Solute carrier family 12 member 8 (721 aa).

Helical transmembrane passes span 53-73, 84-104, 115-135, 136-156, 174-194, 196-216, 247-267, 283-303, 321-341, 374-394, and 397-417; these read FGTWDGVFTSCMINIFGVVLF, GVLLGIVLVSFVILVALVTVL, IGSGGVYSMVSTVLGGKVGGT, IGVLYIFGQCVAGAMYITGFA, ISLAVLVGLLGINLAGVKWII, LQLLLFLLLAVSTLDFVIGSF, FFTVFGVFFPAATGVMVGFNM, LAAIGTSWFLYVVFVFLLGAI, LVGGLFLLGLYISSLASCMGG, PVAAIFITGLLTMAFVFIGQV, and LAPIVTINFMLTYSAVDYSYF. 2 disordered regions span residues 473 to 505 and 533 to 580; these read PNHTEAPESTSSQEKDPKMFKFSKPRKPAKQTL and NESQ…STVA. Positions 553–565 are enriched in acidic residues; it reads TESDEPDSEEDVD. The next 2 helical transmembrane spans lie at 606 to 626 and 628 to 648; these read FLGAILSIVIMFVIQWIYALV and LGVAIILYLYIGRVNPGLNPG.

The protein belongs to the SLC12A transporter family.

The protein resides in the membrane. Functionally, cation/chloride cotransporter. The protein is Solute carrier family 12 member 8 (slc12a8) of Xenopus laevis (African clawed frog).